The primary structure comprises 190 residues: Xanthine phosphoribosyltransferase 2 (190 aa).

Residues leucine 20 and asparagine 27 each coordinate xanthine. A 5-phospho-alpha-D-ribose 1-diphosphate-binding site is contributed by alanine 129–alanine 133. Position 157 (lysine 157) interacts with xanthine.

Belongs to the purine/pyrimidine phosphoribosyltransferase family. Xpt subfamily. Homodimer.

The protein resides in the cytoplasm. It catalyses the reaction XMP + diphosphate = xanthine + 5-phospho-alpha-D-ribose 1-diphosphate. It participates in purine metabolism; XMP biosynthesis via salvage pathway; XMP from xanthine: step 1/1. Its function is as follows. Converts the preformed base xanthine, a product of nucleic acid breakdown, to xanthosine 5'-monophosphate (XMP), so it can be reused for RNA or DNA synthesis. In Clostridium botulinum (strain Langeland / NCTC 10281 / Type F), this protein is Xanthine phosphoribosyltransferase 2.